A 270-amino-acid polypeptide reads, in one-letter code: 3-methyl-2-oxobutanoate hydroxymethyltransferase (270 aa).

Positions 50 and 89 each coordinate Mg(2+). Residues 50-51, D89, and K118 each bind 3-methyl-2-oxobutanoate; that span reads DS. Position 120 (E120) interacts with Mg(2+). E187 serves as the catalytic Proton acceptor.

This sequence belongs to the PanB family. As to quaternary structure, homodecamer; pentamer of dimers. Mg(2+) serves as cofactor.

The protein localises to the cytoplasm. The catalysed reaction is 3-methyl-2-oxobutanoate + (6R)-5,10-methylene-5,6,7,8-tetrahydrofolate + H2O = 2-dehydropantoate + (6S)-5,6,7,8-tetrahydrofolate. It functions in the pathway cofactor biosynthesis; (R)-pantothenate biosynthesis; (R)-pantoate from 3-methyl-2-oxobutanoate: step 1/2. Functionally, catalyzes the reversible reaction in which hydroxymethyl group from 5,10-methylenetetrahydrofolate is transferred onto alpha-ketoisovalerate to form ketopantoate. This chain is 3-methyl-2-oxobutanoate hydroxymethyltransferase, found in Helicobacter pylori (strain Shi470).